Consider the following 178-residue polypeptide: Large ribosomal subunit protein uL6 (178 aa).

It belongs to the universal ribosomal protein uL6 family. As to quaternary structure, part of the 50S ribosomal subunit.

Functionally, this protein binds to the 23S rRNA, and is important in its secondary structure. It is located near the subunit interface in the base of the L7/L12 stalk, and near the tRNA binding site of the peptidyltransferase center. This chain is Large ribosomal subunit protein uL6, found in Streptococcus gordonii (strain Challis / ATCC 35105 / BCRC 15272 / CH1 / DL1 / V288).